The chain runs to 594 residues: Protein FAM200C (594 aa).

The sequence is that of Protein FAM200C (FAM200C) from Bos taurus (Bovine).